Consider the following 143-residue polypeptide: Large ribosomal subunit protein uL11 (143 aa).

The protein belongs to the universal ribosomal protein uL11 family. In terms of assembly, part of the ribosomal stalk of the 50S ribosomal subunit. Interacts with L10 and the large rRNA to form the base of the stalk. L10 forms an elongated spine to which L12 dimers bind in a sequential fashion forming a multimeric L10(L12)X complex. In terms of processing, one or more lysine residues are methylated.

Functionally, forms part of the ribosomal stalk which helps the ribosome interact with GTP-bound translation factors. The chain is Large ribosomal subunit protein uL11 from Paracidovorax citrulli (strain AAC00-1) (Acidovorax citrulli).